Consider the following 187-residue polypeptide: Decorin-binding protein B (187 aa).

Positions Met-1–Ala-20 are cleaved as a signal peptide.

It belongs to the decorin-binding protein family.

Binds to decorin which may mediate the adherence of B.burgdorferi to collagen fibers in skin and other tissues. The sequence is that of Decorin-binding protein B (dbpB) from Borreliella burgdorferi (strain ATCC 35210 / DSM 4680 / CIP 102532 / B31) (Borrelia burgdorferi).